Consider the following 445-residue polypeptide: Trigger factor (445 aa).

Residues 171-256 (NDIVIIDFKG…VHVVNEVETP (86 aa)) enclose the PPIase FKBP-type domain.

Belongs to the FKBP-type PPIase family. Tig subfamily.

The protein resides in the cytoplasm. The enzyme catalyses [protein]-peptidylproline (omega=180) = [protein]-peptidylproline (omega=0). Involved in protein export. Acts as a chaperone by maintaining the newly synthesized protein in an open conformation. Functions as a peptidyl-prolyl cis-trans isomerase. This is Trigger factor from Malacoplasma penetrans (strain HF-2) (Mycoplasma penetrans).